A 402-amino-acid chain; its full sequence is Sulfate adenylyltransferase (402 aa).

This sequence belongs to the sulfate adenylyltransferase family.

It catalyses the reaction sulfate + ATP + H(+) = adenosine 5'-phosphosulfate + diphosphate. The protein operates within sulfur metabolism; hydrogen sulfide biosynthesis; sulfite from sulfate: step 1/3. This is Sulfate adenylyltransferase from Vesicomyosocius okutanii subsp. Calyptogena okutanii (strain HA).